We begin with the raw amino-acid sequence, 87 residues long: Small ribosomal subunit protein uS17 (87 aa).

This sequence belongs to the universal ribosomal protein uS17 family. As to quaternary structure, part of the 30S ribosomal subunit.

In terms of biological role, one of the primary rRNA binding proteins, it binds specifically to the 5'-end of 16S ribosomal RNA. In Heliobacterium modesticaldum (strain ATCC 51547 / Ice1), this protein is Small ribosomal subunit protein uS17.